Consider the following 262-residue polypeptide: Acetylglutamate kinase (262 aa).

Residues 46–47 (GG), Arg68, and Asn160 contribute to the substrate site.

Belongs to the acetylglutamate kinase family. ArgB subfamily.

The protein localises to the cytoplasm. The enzyme catalyses N-acetyl-L-glutamate + ATP = N-acetyl-L-glutamyl 5-phosphate + ADP. It functions in the pathway amino-acid biosynthesis; L-arginine biosynthesis; N(2)-acetyl-L-ornithine from L-glutamate: step 2/4. Functionally, catalyzes the ATP-dependent phosphorylation of N-acetyl-L-glutamate. This is Acetylglutamate kinase from Shewanella amazonensis (strain ATCC BAA-1098 / SB2B).